The following is a 262-amino-acid chain: Phosphatidylserine decarboxylase proenzyme (262 aa).

Active-site charge relay system; for autoendoproteolytic cleavage activity residues include Asp-86, His-142, and Ser-226. Ser-226 serves as the catalytic Schiff-base intermediate with substrate; via pyruvic acid; for decarboxylase activity. Ser-226 is modified (pyruvic acid (Ser); by autocatalysis).

Belongs to the phosphatidylserine decarboxylase family. PSD-B subfamily. Prokaryotic type I sub-subfamily. In terms of assembly, heterodimer of a large membrane-associated beta subunit and a small pyruvoyl-containing alpha subunit. It depends on pyruvate as a cofactor. Is synthesized initially as an inactive proenzyme. Formation of the active enzyme involves a self-maturation process in which the active site pyruvoyl group is generated from an internal serine residue via an autocatalytic post-translational modification. Two non-identical subunits are generated from the proenzyme in this reaction, and the pyruvate is formed at the N-terminus of the alpha chain, which is derived from the carboxyl end of the proenzyme. The autoendoproteolytic cleavage occurs by a canonical serine protease mechanism, in which the side chain hydroxyl group of the serine supplies its oxygen atom to form the C-terminus of the beta chain, while the remainder of the serine residue undergoes an oxidative deamination to produce ammonia and the pyruvoyl prosthetic group on the alpha chain. During this reaction, the Ser that is part of the protease active site of the proenzyme becomes the pyruvoyl prosthetic group, which constitutes an essential element of the active site of the mature decarboxylase.

It is found in the cell membrane. The catalysed reaction is a 1,2-diacyl-sn-glycero-3-phospho-L-serine + H(+) = a 1,2-diacyl-sn-glycero-3-phosphoethanolamine + CO2. Its pathway is phospholipid metabolism; phosphatidylethanolamine biosynthesis; phosphatidylethanolamine from CDP-diacylglycerol: step 2/2. Catalyzes the formation of phosphatidylethanolamine (PtdEtn) from phosphatidylserine (PtdSer). This Bacillus cereus (strain ZK / E33L) protein is Phosphatidylserine decarboxylase proenzyme.